The primary structure comprises 426 residues: Histidine--tRNA ligase (426 aa).

Belongs to the class-II aminoacyl-tRNA synthetase family.

Its subcellular location is the cytoplasm. The catalysed reaction is tRNA(His) + L-histidine + ATP = L-histidyl-tRNA(His) + AMP + diphosphate + H(+). This is Histidine--tRNA ligase from Saccharolobus islandicus (strain Y.N.15.51 / Yellowstone #2) (Sulfolobus islandicus).